Reading from the N-terminus, the 195-residue chain is Protein GrpE (195 aa).

Residues 1 to 20 are compositionally biased toward basic and acidic residues; sequence MSSKEQKTPDEQVLDQKEAA. Residues 1–40 form a disordered region; it reads MSSKEQKTPDEQVLDQKEAAKGQQADAAPETADVADPRDE.

Belongs to the GrpE family. In terms of assembly, homodimer.

It is found in the cytoplasm. Participates actively in the response to hyperosmotic and heat shock by preventing the aggregation of stress-denatured proteins, in association with DnaK and GrpE. It is the nucleotide exchange factor for DnaK and may function as a thermosensor. Unfolded proteins bind initially to DnaJ; upon interaction with the DnaJ-bound protein, DnaK hydrolyzes its bound ATP, resulting in the formation of a stable complex. GrpE releases ADP from DnaK; ATP binding to DnaK triggers the release of the substrate protein, thus completing the reaction cycle. Several rounds of ATP-dependent interactions between DnaJ, DnaK and GrpE are required for fully efficient folding. The polypeptide is Protein GrpE (Pectobacterium atrosepticum (strain SCRI 1043 / ATCC BAA-672) (Erwinia carotovora subsp. atroseptica)).